The chain runs to 74 residues: NAD(P)H-quinone oxidoreductase subunit L (74 aa).

A run of 2 helical transmembrane segments spans residues 5–25 and 43–63; these read LIIAALYLALAGAYLLVVPAA and AFMYFLVFFFFPGLLLLAPLL.

Belongs to the complex I NdhL subunit family. NDH-1 can be composed of about 15 different subunits; different subcomplexes with different compositions have been identified which probably have different functions.

It is found in the cellular thylakoid membrane. The enzyme catalyses a plastoquinone + NADH + (n+1) H(+)(in) = a plastoquinol + NAD(+) + n H(+)(out). It carries out the reaction a plastoquinone + NADPH + (n+1) H(+)(in) = a plastoquinol + NADP(+) + n H(+)(out). Functionally, NDH-1 shuttles electrons from an unknown electron donor, via FMN and iron-sulfur (Fe-S) centers, to quinones in the respiratory and/or the photosynthetic chain. The immediate electron acceptor for the enzyme in this species is believed to be plastoquinone. Couples the redox reaction to proton translocation, and thus conserves the redox energy in a proton gradient. Cyanobacterial NDH-1 also plays a role in inorganic carbon-concentration. This chain is NAD(P)H-quinone oxidoreductase subunit L, found in Synechococcus elongatus (strain ATCC 33912 / PCC 7942 / FACHB-805) (Anacystis nidulans R2).